Consider the following 297-residue polypeptide: MTGLYELVWRVLHALLCLHLTLTSWLRVRFGTWNWIWRRCCRAASAAVLAPLGFTLRKPRAVGRNRRHHRHPHGGPGPGPGPAATHPRLRWRADVRSLQKLPVHMGLLVTEEVQEPSFSDIASLVVWCMAVGISYISVYDHQGIFKRNNSRLMDEILKQQQELLGQDCSKYSAEFANSNDKDDQDLNCPSAVKVLSPEDGKADIVRAAQDFCQLVAQQQRKPTDLDVDLLGSLLSSHGFPDPDLVLKFGPVDSTLGFLPWQIRLTEIVSLPSHLNISYEDFFSALRQYAACEQRLGK.

2 helical membrane passes run 7 to 26 (LVWR…TSWL) and 40 to 56 (CCRA…GFTL). A compositionally biased stretch (basic residues) spans 63 to 73 (GRNRRHHRHPH). Positions 63–86 (GRNRRHHRHPHGGPGPGPGPAATH) are disordered. The helical transmembrane segment at 121–139 (IASLVVWCMAVGISYISVY) threads the bilayer. Residues Asn148 and Asn275 are each glycosylated (N-linked (GlcNAc...) asparagine). The RXG motif; crucial for prenyltransferase activity signature appears at 294–296 (RLG). 2 residues coordinate isopentenyl diphosphate: Leu295 and Gly296.

Belongs to the UPP synthase family. As to quaternary structure, the active dehydrodolichyl diphosphate synthase complex is a heterotetramer composed of a dimer of heterodimer of DHDDS and NUS1. Interacts with NPC2. Mg(2+) is required as a cofactor. As to expression, highly expressed in heart, liver, kidney and pancreas.

Its subcellular location is the endoplasmic reticulum membrane. The enzyme catalyses n isopentenyl diphosphate + (2E,6E)-farnesyl diphosphate = a di-trans,poly-cis-polyprenyl diphosphate + n diphosphate. It participates in protein modification; protein glycosylation. It functions in the pathway lipid metabolism. Its function is as follows. With DHDDS, forms the dehydrodolichyl diphosphate synthase (DDS) complex, an essential component of the dolichol monophosphate (Dol-P) biosynthetic machinery. Both subunits contribute to enzymatic activity, i.e. condensation of multiple copies of isopentenyl pyrophosphate (IPP) to farnesyl pyrophosphate (FPP) to produce dehydrodolichyl diphosphate (Dedol-PP), a precursor of dolichol phosphate which is utilized as a sugar carrier in protein glycosylation in the endoplasmic reticulum (ER). Synthesizes long-chain polyprenols, mostly of C95 and C100 chain length. Regulates the glycosylation and stability of nascent NPC2, thereby promoting trafficking of LDL-derived cholesterol. Acts as a specific receptor for the N-terminus of Nogo-B, a neural and cardiovascular regulator. The sequence is that of Dehydrodolichyl diphosphate synthase complex subunit Nus1 from Mus musculus (Mouse).